The sequence spans 364 residues: Anthranilate phosphoribosyltransferase (364 aa).

5-phospho-alpha-D-ribose 1-diphosphate contacts are provided by residues G101, 104–105 (GD), T109, 111–114 (NLST), 129–137 (KHGNRAASS), and G141. G101 contacts anthranilate. Mg(2+) is bound at residue S113. N132 contacts anthranilate. Residue R187 participates in anthranilate binding. 2 residues coordinate Mg(2+): D245 and E246.

It belongs to the anthranilate phosphoribosyltransferase family. As to quaternary structure, homodimer. The cofactor is Mg(2+).

It carries out the reaction N-(5-phospho-beta-D-ribosyl)anthranilate + diphosphate = 5-phospho-alpha-D-ribose 1-diphosphate + anthranilate. It functions in the pathway amino-acid biosynthesis; L-tryptophan biosynthesis; L-tryptophan from chorismate: step 2/5. In terms of biological role, catalyzes the transfer of the phosphoribosyl group of 5-phosphorylribose-1-pyrophosphate (PRPP) to anthranilate to yield N-(5'-phosphoribosyl)-anthranilate (PRA). This is Anthranilate phosphoribosyltransferase from Mycolicibacterium vanbaalenii (strain DSM 7251 / JCM 13017 / BCRC 16820 / KCTC 9966 / NRRL B-24157 / PYR-1) (Mycobacterium vanbaalenii).